The sequence spans 269 residues: Formamidopyrimidine-DNA glycosylase (269 aa).

The Schiff-base intermediate with DNA role is filled by proline 2. The active-site Proton donor is glutamate 3. The active-site Proton donor; for beta-elimination activity is lysine 57. Histidine 90, arginine 109, and lysine 150 together coordinate DNA. Residues 235–269 form an FPG-type zinc finger; that stretch reads QVYGKAGESCPECGEAIQELKIGQRNTFYCSYCQC. The active-site Proton donor; for delta-elimination activity is the arginine 259.

This sequence belongs to the FPG family. In terms of assembly, monomer. Requires Zn(2+) as cofactor.

It carries out the reaction Hydrolysis of DNA containing ring-opened 7-methylguanine residues, releasing 2,6-diamino-4-hydroxy-5-(N-methyl)formamidopyrimidine.. The catalysed reaction is 2'-deoxyribonucleotide-(2'-deoxyribose 5'-phosphate)-2'-deoxyribonucleotide-DNA = a 3'-end 2'-deoxyribonucleotide-(2,3-dehydro-2,3-deoxyribose 5'-phosphate)-DNA + a 5'-end 5'-phospho-2'-deoxyribonucleoside-DNA + H(+). In terms of biological role, involved in base excision repair of DNA damaged by oxidation or by mutagenic agents. Acts as a DNA glycosylase that recognizes and removes damaged bases. Has a preference for oxidized purines, such as 7,8-dihydro-8-oxoguanine (8-oxoG). Has AP (apurinic/apyrimidinic) lyase activity and introduces nicks in the DNA strand. Cleaves the DNA backbone by beta-delta elimination to generate a single-strand break at the site of the removed base with both 3'- and 5'-phosphates. This is Formamidopyrimidine-DNA glycosylase from Vibrio vulnificus (strain YJ016).